The primary structure comprises 210 residues: Somatotropin (210 aa).

The signal sequence occupies residues 1-22 (MGQVFLLMPVLLVSCFLSQGAA). H38 is a Zn(2+) binding site. The cysteines at positions 71 and 183 are disulfide-linked. E192 contributes to the Zn(2+) binding site. Cysteines 200 and 208 form a disulfide.

This sequence belongs to the somatotropin/prolactin family.

The protein resides in the secreted. In terms of biological role, growth hormone plays an important role in growth control and is involved in the regulation of several anabolic processes. Implicated as an osmoregulatory substance important for seawater adaptation. The protein is Somatotropin (gh) of Oncorhynchus tshawytscha (Chinook salmon).